Reading from the N-terminus, the 397-residue chain is GTPase Obg (397 aa).

An Obg domain is found at 1–159 (MKFVDEAEIR…RMLKLELMLL (159 aa)). Positions 22–44 (SFRREKYVPDGGPDGGDGGDGGS) are disordered. Residues 33–43 (GPDGGDGGDGG) are compositionally biased toward gly residues. An OBG-type G domain is found at 160–333 (ADVGLLGMPN…LCIKVMDFIE (174 aa)). Residues 166-173 (GMPNAGKS), 191-195 (FTTLV), 213-216 (DIPG), 283-286 (NKVD), and 314-316 (SAV) each bind GTP. Serine 173 and threonine 193 together coordinate Mg(2+). Residues 359 to 389 (TVENYEDDDDFDDDDDDDFDGDDDDDFDGDD) form a disordered region. Over residues 361 to 389 (ENYEDDDDFDDDDDDDFDGDDDDDFDGDD) the composition is skewed to acidic residues.

The protein belongs to the TRAFAC class OBG-HflX-like GTPase superfamily. OBG GTPase family. Monomer. The cofactor is Mg(2+).

It localises to the cytoplasm. An essential GTPase which binds GTP, GDP and possibly (p)ppGpp with moderate affinity, with high nucleotide exchange rates and a fairly low GTP hydrolysis rate. Plays a role in control of the cell cycle, stress response, ribosome biogenesis and in those bacteria that undergo differentiation, in morphogenesis control. This chain is GTPase Obg, found in Pseudoalteromonas atlantica (strain T6c / ATCC BAA-1087).